Consider the following 289-residue polypeptide: S-methyl-5'-thioadenosine phosphorylase (289 aa).

Phosphate-binding positions include S24, 66 to 67 (RH), and 99 to 100 (TA). Position 202 (M202) interacts with substrate. Residue T203 participates in phosphate binding. Substrate is bound at residue 226–228 (DYD).

This sequence belongs to the PNP/MTAP phosphorylase family. MTAP subfamily. Homotrimer. As to expression, in embryos, expressed in the fat body and visceral mesoderm.

It is found in the cytoplasm. The protein resides in the nucleus. It carries out the reaction S-methyl-5'-thioadenosine + phosphate = 5-(methylsulfanyl)-alpha-D-ribose 1-phosphate + adenine. It participates in amino-acid biosynthesis; L-methionine biosynthesis via salvage pathway; S-methyl-5-thio-alpha-D-ribose 1-phosphate from S-methyl-5'-thioadenosine (phosphorylase route): step 1/1. Its function is as follows. Catalyzes the reversible phosphorylation of S-methyl-5'-thioadenosine (MTA) to adenine and 5-methylthioribose-1-phosphate. Involved in the breakdown of MTA, a major by-product of polyamine biosynthesis. Responsible for the first step in the methionine salvage pathway after MTA has been generated from S-adenosylmethionine. Has broad substrate specificity with 6-aminopurine nucleosides as preferred substrates. The polypeptide is S-methyl-5'-thioadenosine phosphorylase (Mtap) (Drosophila melanogaster (Fruit fly)).